The sequence spans 564 residues: NAD-dependent malic enzyme (564 aa).

The Proton donor role is filled by tyrosine 104. Arginine 157 is a binding site for NAD(+). Lysine 175 acts as the Proton acceptor in catalysis. A divalent metal cation-binding residues include glutamate 246, aspartate 247, and aspartate 270. Positions 270 and 417 each coordinate NAD(+).

The protein belongs to the malic enzymes family. As to quaternary structure, homotetramer. The cofactor is Mg(2+). Requires Mn(2+) as cofactor.

It catalyses the reaction (S)-malate + NAD(+) = pyruvate + CO2 + NADH. It carries out the reaction oxaloacetate + H(+) = pyruvate + CO2. This Aeromonas hydrophila subsp. hydrophila (strain ATCC 7966 / DSM 30187 / BCRC 13018 / CCUG 14551 / JCM 1027 / KCTC 2358 / NCIMB 9240 / NCTC 8049) protein is NAD-dependent malic enzyme.